Consider the following 381-residue polypeptide: Glycerate 2-kinase (381 aa).

Belongs to the glycerate kinase type-1 family.

It catalyses the reaction (R)-glycerate + ATP = (2R)-2-phosphoglycerate + ADP + H(+). In terms of biological role, catalyzes the transfer of the phosphate group from adenosine triphosphate (ATP) to (R)-glycerate to form (2R)-2-phosphoglycerate, an enzymatic step in (L)-glucarate/galactarate catabolic pathway. This is Glycerate 2-kinase (garK) from Escherichia coli (strain K12).